A 242-amino-acid chain; its full sequence is Phosphoribosylaminoimidazole-succinocarboxamide synthase (242 aa).

It belongs to the SAICAR synthetase family.

The enzyme catalyses 5-amino-1-(5-phospho-D-ribosyl)imidazole-4-carboxylate + L-aspartate + ATP = (2S)-2-[5-amino-1-(5-phospho-beta-D-ribosyl)imidazole-4-carboxamido]succinate + ADP + phosphate + 2 H(+). It participates in purine metabolism; IMP biosynthesis via de novo pathway; 5-amino-1-(5-phospho-D-ribosyl)imidazole-4-carboxamide from 5-amino-1-(5-phospho-D-ribosyl)imidazole-4-carboxylate: step 1/2. The chain is Phosphoribosylaminoimidazole-succinocarboxamide synthase (purC) from Methanocaldococcus jannaschii (strain ATCC 43067 / DSM 2661 / JAL-1 / JCM 10045 / NBRC 100440) (Methanococcus jannaschii).